A 353-amino-acid chain; its full sequence is Cytochrome c biogenesis protein CcsA (353 aa).

Helical transmembrane passes span 15 to 35 (FAIL…PNLP), 37 to 57 (LAAL…TLLG), 68 to 88 (LSNL…VHLI), 97 to 117 (LVGV…TMTL), 142 to 162 (VMML…AFLI), 261 to 281 (IIGL…VWAN), 288 to 308 (WSWD…AAYL), and 322 to 342 (AILA…VNLL).

The protein belongs to the CcmF/CycK/Ccl1/NrfE/CcsA family. As to quaternary structure, may interact with ccs1.

The protein localises to the cellular thylakoid membrane. Functionally, required during biogenesis of c-type cytochromes (cytochrome c6 and cytochrome f) at the step of heme attachment. This is Cytochrome c biogenesis protein CcsA from Nostoc punctiforme (strain ATCC 29133 / PCC 73102).